A 424-amino-acid polypeptide reads, in one-letter code: Myb family transcription factor RLI1 (424 aa).

Residues 144–165 (RPQKRDSGERTPLPPPSQQQHQ) form a disordered region. The 61-residue stretch at 238 to 298 (APSKTRIRWT…HLQKYRIAKY (61 aa)) folds into the HTH myb-type domain. A DNA-binding region (H-T-H motif) is located at residues 269–294 (PKGILKLMNSDGLTIYHIKSHLQKYR). The stretch at 326–391 (MQITEALRVQ…ELDDVVAFAA (66 aa)) forms a coiled coil. The short motif at 342-347 (LHEQLE) is the LHEQLE element.

This sequence belongs to the MYB-CC family. Interacts with SPX1 and SPX2 in the nucleus; these interactions prevent binding to the promoters of target genes, thus regulating negatively leaf inclination in response to phosphate (Pi) starvation. In terms of assembly, homodimer. Interacts with PHR2 in the nucleus. As to expression, mostly expressed in roots and leaves blades and, to a lower extent, in leaves sheaths, culms and panicles. Localized in leaves lamina joints. In terms of tissue distribution, expressed equally in shoots and roots. Mostly expressed in shoots and, to a lower extent, in roots.

It is found in the nucleus. In terms of biological role, transcription factor binding to specific DNA sequences of target genes promoters, such as the motif R1BS 5'-NAKATNCN-3' and the motif P1BS 5'-GNATATNC-3' to trigger their expression. Nitrate-induced component involved in modulating phosphate (Pi) response and homeostasis together with PHR2; activates directly the expression of Pi starvation-induced (PSI) genes upon nitrate disponibility, thus triggering the nitrate-induced phosphate response (NIPR) promoting Pi uptake activity. Its function is as follows. Binds preferentially to the P1BS motif 5'-GNATATNC-3' in target genes promoters. Functionally, binds preferentially to the R1BS motif 5'-NAKATNCN-3' in target genes promoters, including several genes involved in the plant hormone signal transduction pathway. Involved in the shoot architecture; positively regulates leaf inclination by affecting lamina joint cell elongation via the direct promotion of ILI4/BU1 and BC1 genes expression, especially in response to phosphate (Pi) availability. Regulates both brassinolide (BL) biosynthesis and signaling by directly activating BL-biosynthesis and signaling genes. The polypeptide is Myb family transcription factor RLI1 (Oryza sativa subsp. japonica (Rice)).